Reading from the N-terminus, the 360-residue chain is Mannose-1-phosphate guanyltransferase beta-A (360 aa).

This sequence belongs to the transferase hexapeptide repeat family.

It catalyses the reaction alpha-D-mannose 1-phosphate + GTP + H(+) = GDP-alpha-D-mannose + diphosphate. It functions in the pathway nucleotide-sugar biosynthesis; GDP-alpha-D-mannose biosynthesis; GDP-alpha-D-mannose from alpha-D-mannose 1-phosphate (GTP route): step 1/1. The sequence is that of Mannose-1-phosphate guanyltransferase beta-A (gmppb-a) from Xenopus laevis (African clawed frog).